Reading from the N-terminus, the 262-residue chain is Small ribosomal subunit protein eS1 (262 aa).

The span at 234-251 (DPKEDSGKNVKSLPESKE) shows a compositional bias: basic and acidic residues. The segment at 234-262 (DPKEDSGKNVKSLPESKEATNILTAELKH) is disordered.

This sequence belongs to the eukaryotic ribosomal protein eS1 family. In terms of assembly, component of the small ribosomal subunit. Mature ribosomes consist of a small (40S) and a large (60S) subunit. The 40S subunit contains about 33 different proteins and 1 molecule of RNA (18S). The 60S subunit contains about 49 different proteins and 3 molecules of RNA (25S, 5.8S and 5S).

It localises to the cytoplasm. This chain is Small ribosomal subunit protein eS1, found in Plasmodium yoelii yoelii.